Here is a 307-residue protein sequence, read N- to C-terminus: Tyrosine recombinase XerC (307 aa).

The region spanning 6–89 (HNTLQTVNTF…TLRTFFRYLM (84 aa)) is the Core-binding (CB) domain. In terms of domain architecture, Tyr recombinase spans 110-293 (RLPKALDVDQ…DFQHLAQVYD (184 aa)). Catalysis depends on residues Arg-151, Lys-175, His-245, Arg-248, and His-271. The active-site O-(3'-phospho-DNA)-tyrosine intermediate is Tyr-280.

This sequence belongs to the 'phage' integrase family. XerC subfamily. Forms a cyclic heterotetrameric complex composed of two molecules of XerC and two molecules of XerD.

Its subcellular location is the cytoplasm. Its function is as follows. Site-specific tyrosine recombinase, which acts by catalyzing the cutting and rejoining of the recombining DNA molecules. The XerC-XerD complex is essential to convert dimers of the bacterial chromosome into monomers to permit their segregation at cell division. It also contributes to the segregational stability of plasmids. The polypeptide is Tyrosine recombinase XerC (Alcanivorax borkumensis (strain ATCC 700651 / DSM 11573 / NCIMB 13689 / SK2)).